The chain runs to 126 residues: TFIAIKPDGVQRGLCGEVMKFIQPMKQHYLDLKDMPFYAGLCKYMASGPVFAMVWEGEGIVKMMLGETNPADSKPGSIRGDFCINIGRNIIHGSDTLENAKMEIGLWFKGEEFVAYAEKAKAWVYE.

Lysine 6, phenylalanine 37, threonine 68, arginine 79, and asparagine 89 together coordinate ATP. Residue histidine 92 is the Pros-phosphohistidine intermediate of the active site.

Belongs to the NDK family. Mg(2+) is required as a cofactor.

It is found in the cytoplasm. The protein localises to the nucleus. It localises to the cell projection. Its subcellular location is the lamellipodium. The protein resides in the ruffle. The catalysed reaction is a 2'-deoxyribonucleoside 5'-diphosphate + ATP = a 2'-deoxyribonucleoside 5'-triphosphate + ADP. The enzyme catalyses a ribonucleoside 5'-diphosphate + ATP = a ribonucleoside 5'-triphosphate + ADP. Major role in the synthesis of nucleoside triphosphates other than ATP. The sequence is that of Nucleoside diphosphate kinase B (nme2) from Macruronus magellanicus (Patagonian grenadier).